The following is a 111-amino-acid chain: Cytochrome c (111 aa).

At Ala1 the chain carries N-acetylalanine. Residues Cys22, Cys25, and His26 each coordinate heme c. N6,N6,N6-trimethyllysine is present on Lys80. Met88 contributes to the heme c binding site. Lys94 carries the N6,N6,N6-trimethyllysine modification.

The protein belongs to the cytochrome c family. Post-translationally, binds 1 heme c group covalently per subunit.

It localises to the mitochondrion intermembrane space. Its function is as follows. Electron carrier protein. The oxidized form of the cytochrome c heme group can accept an electron from the heme group of the cytochrome c1 subunit of cytochrome reductase. Cytochrome c then transfers this electron to the cytochrome oxidase complex, the final protein carrier in the mitochondrial electron-transport chain. This chain is Cytochrome c, found in Nigella damascena (Love-in-a-mist).